The primary structure comprises 344 residues: Heme A synthase (344 aa).

A run of 9 helical transmembrane segments spans residues 20 to 40 (IAWW…VGGL), 104 to 124 (RFLG…FVVT), 135 to 155 (LIFL…MVMS), 170 to 190 (AHLG…LDLL), 205 to 225 (AAAI…VAGI), 233 to 253 (TWPL…TPVW), 265 to 285 (FQHR…WWAA), 296 to 316 (WLAV…LWVV), and 317 to 337 (PIPL…VAVW). H267 is a heme binding site. H324 contacts heme.

It belongs to the COX15/CtaA family. Type 2 subfamily. In terms of assembly, interacts with CtaB. Heme b serves as cofactor.

It localises to the cell membrane. It catalyses the reaction Fe(II)-heme o + 2 A + H2O = Fe(II)-heme a + 2 AH2. It participates in porphyrin-containing compound metabolism; heme A biosynthesis; heme A from heme O: step 1/1. In terms of biological role, catalyzes the conversion of heme O to heme A by two successive hydroxylations of the methyl group at C8. The first hydroxylation forms heme I, the second hydroxylation results in an unstable dihydroxymethyl group, which spontaneously dehydrates, resulting in the formyl group of heme A. The protein is Heme A synthase of Parvibaculum lavamentivorans (strain DS-1 / DSM 13023 / NCIMB 13966).